The primary structure comprises 174 residues: Mitochondrial holo-[acyl-carrier-protein] synthase (174 aa).

This sequence belongs to the P-Pant transferase superfamily. AcpS family.

It is found in the mitochondrion. It carries out the reaction apo-[ACP] + CoA = holo-[ACP] + adenosine 3',5'-bisphosphate + H(+). Functionally, transfers the 4'-phosphopantetheine moiety from coenzyme A to a Ser of mitochondrial acyl-carrier-protein. This Eremothecium gossypii (strain ATCC 10895 / CBS 109.51 / FGSC 9923 / NRRL Y-1056) (Yeast) protein is Mitochondrial holo-[acyl-carrier-protein] synthase (PPT2).